Reading from the N-terminus, the 38-residue chain is uncharacterized protein (38 aa).

It belongs to the asfivirus C84L family.

This is an uncharacterized protein from Ornithodoros (relapsing fever ticks).